Consider the following 428-residue polypeptide: Spliceosome RNA helicase DDX39B (428 aa).

Residues 1 to 19 (MAENDVDNELLDYEDDEVE) show a composition bias toward acidic residues. Residues 1–31 (MAENDVDNELLDYEDDEVETAAGGDGAEAPA) are disordered. Alanine 2 carries the post-translational modification N-acetylalanine. Lysine 36 bears the N6-acetyllysine; alternate mark. Lysine 36 participates in a covalent cross-link: Glycyl lysine isopeptide (Lys-Gly) (interchain with G-Cter in SUMO2); alternate. 2 positions are modified to phosphoserine: serine 38 and serine 41. Residues 45-73 (SGFRDFLLKPELLRAIVDCGFEHPSEVQH) carry the Q motif motif. Residues 76-249 (IPQAILGMDV…RKFMQDPMEI (174 aa)) enclose the Helicase ATP-binding domain. 89 to 96 (AKSGMGKT) serves as a coordination point for ATP. Threonine 172 carries the post-translational modification Phosphothreonine. Positions 196-199 (DECD) match the DECD box motif. One can recognise a Helicase C-terminal domain in the interval 261-422 (GLQQYYVKLK…ELPDEIDISS (162 aa)).

The protein belongs to the DEAD box helicase family. DECD subfamily. In terms of assembly, homodimer, and heterodimer with DDX39A. DDX39B interacts with the THO subcomplex to form the THO-DDX39B complex which multimerizes into a 28-subunit tetrameric assembly. Component of the transcription/export (TREX) complex at least composed of ALYREF/THOC4, DDX39B, SARNP/CIP29, CHTOP and the THO subcomplex; in the complex interacts with THOC2. THOC1-THOC2-THOC3-DDX39B subcomplex is sufficient for the interaction with export factor NXF1-NXT1. TREX seems to have a dynamic structure involving ATP-dependent remodeling. Within the TREX complex bridges ALYREF/THOC4 and the THO subcomplex, and, in a ATP-dependent manner, ALYREF/THOC4 and SARNP/CIP29. Component of the spliceosome. Interacts directly with U2AF2. Interacts with RBM8A, RNPS1 and SRRM1, FYTTD1/UIF, THOC1, MX1 and POLDIP3. Interacts with LUZP4. Interacts with SARNP/CIP29 (via the C-terminal domain); the interaction is direct and facilitates RNA binding of DDX39B.

It is found in the nucleus. The protein resides in the nucleus speckle. It localises to the cytoplasm. The enzyme catalyses ATP + H2O = ADP + phosphate + H(+). Functionally, involved in nuclear export of spliced and unspliced mRNA. Component of the TREX complex which is thought to couple mRNA transcription, processing and nuclear export, and specifically associates with spliced mRNA and not with unspliced pre-mRNA. The TREX complex is recruited to spliced mRNAs by a transcription-independent mechanism, binds to mRNA upstream of the exon-junction complex (EJC) and is recruited in a splicing- and cap-dependent manner to a region near the 5' end of the mRNA where it functions in mRNA export to the cytoplasm via the TAP/NXF1 pathway. The THOC1-THOC2-THOC3 core complex alone is sufficient to promote ATPase activity of DDX39B; in the complex THOC2 is the only component that directly interacts with DDX39B. Associates with SARNP/CIP29, which facilitates RNA binding of DDX39B and likely plays a role in mRNA export. May undergo several rounds of ATP hydrolysis during assembly of TREX to drive subsequent loading of components such as ALYREF/THOC4 and CHTOP onto mRNA. Also associates with pre-mRNA independent of ALYREF/THOC4. Involved in the nuclear export of intronless mRNA; the ATP-bound form is proposed to recruit export adapter ALYREF/THOC4 to intronless mRNA; its ATPase activity is cooperatively stimulated by RNA and ALYREF/THOC4 and ATP hydrolysis is thought to trigger the dissociation from RNA to allow the association of ALYREF/THOC4 and the NXF1-NXT1 heterodimer. Involved in transcription elongation and genome stability. Splice factor that is required for the first ATP-dependent step in spliceosome assembly and for the interaction of U2 snRNP with the branchpoint. Has both RNA-stimulated ATP binding/hydrolysis activity and ATP-dependent RNA unwinding activity. Even with the stimulation of RNA, the ATPase activity is weak. Can only hydrolyze ATP but not other NTPs. The RNA stimulation of ATPase activity does not have a strong preference for the sequence and length of the RNA. However, ssRNA stimulates the ATPase activity much more strongly than dsRNA. Can unwind 5' or 3' overhangs or blunt end RNA duplexes in vitro. The ATPase and helicase activities are not influenced by U2AF2; the effect of ALYREF/THOC4 is reported conflictingly. The protein is Spliceosome RNA helicase DDX39B (DDX39B) of Bos taurus (Bovine).